Reading from the N-terminus, the 341-residue chain is Alpha-1,4-N-acetylglucosaminyltransferase (341 aa).

Topologically, residues 1–4 are cytoplasmic; the sequence is MLKE. A helical; Signal-anchor for type II membrane protein membrane pass occupies residues 5–25; the sequence is IYLSLSLVLVFACGLLYQLTM. The Lumenal segment spans residues 26–341; sequence RSQCFFACLP…VSKKPGTGSR (316 aa). The N-linked (GlcNAc...) asparagine glycan is linked to asparagine 100. The DXD motif signature appears at 168-170; the sequence is DTD.

The protein belongs to the glycosyltransferase 32 family.

The protein localises to the golgi apparatus membrane. It functions in the pathway protein modification; protein glycosylation. Its function is as follows. Catalyzes the transfer of N-acetylglucosamine (GlcNAc) to core 2 branched O-glycans. Necessary for the synthesis of type III mucin which is specifically produced in the stomach, duodenum, and pancreatic duct. May protect against inflammation-associated gastric adenocarcinoma. This Mus musculus (Mouse) protein is Alpha-1,4-N-acetylglucosaminyltransferase.